A 107-amino-acid chain; its full sequence is Nucleoid-associated protein BLi00029/BL02358 (107 aa).

Residues 1–27 (MRGGMGNMQKMMKQMQKMQKDMQKAQE) form a disordered region. Residues 8–17 (MQKMMKQMQK) show a composition bias toward low complexity. Residues 18–27 (MQKDMQKAQE) show a composition bias toward basic and acidic residues.

Belongs to the YbaB/EbfC family. As to quaternary structure, homodimer.

The protein localises to the cytoplasm. It localises to the nucleoid. Functionally, binds to DNA and alters its conformation. May be involved in regulation of gene expression, nucleoid organization and DNA protection. The chain is Nucleoid-associated protein BLi00029/BL02358 from Bacillus licheniformis (strain ATCC 14580 / DSM 13 / JCM 2505 / CCUG 7422 / NBRC 12200 / NCIMB 9375 / NCTC 10341 / NRRL NRS-1264 / Gibson 46).